The following is a 178-amino-acid chain: Large ribosomal subunit protein bL25 (178 aa).

The protein belongs to the bacterial ribosomal protein bL25 family. CTC subfamily. In terms of assembly, part of the 50S ribosomal subunit; part of the 5S rRNA/L5/L18/L25 subcomplex. Contacts the 5S rRNA. Binds to the 5S rRNA independently of L5 and L18.

This is one of the proteins that binds to the 5S RNA in the ribosome where it forms part of the central protuberance. In Campylobacter hominis (strain ATCC BAA-381 / DSM 21671 / CCUG 45161 / LMG 19568 / NCTC 13146 / CH001A), this protein is Large ribosomal subunit protein bL25.